A 268-amino-acid polypeptide reads, in one-letter code: Serine/arginine-rich splicing factor SR30 (268 aa).

RRM domains follow at residues 7–82 and 109–187; these read RTIY…IAHG and YRVL…EYES. The segment covering 186-199 has biased composition (basic and acidic residues); sequence ESRSVSRSPDDSKS. The disordered stretch occupies residues 186-268; sequence ESRSVSRSPD…NSPVSPVISG (83 aa). 11 positions are modified to phosphoserine: Ser193, Ser210, Ser212, Ser214, Ser219, Ser221, Ser227, Ser236, Ser246, Ser256, and Ser260. Residues 207 to 247 show a composition bias toward low complexity; it reads RGPSCSYSSKSRSVSPARSISPRSRPLSRSRSLYSSVSRSQ. A compositionally biased stretch (low complexity) spans 257 to 268; sequence RSNSPVSPVISG.

Belongs to the splicing factor SR family. SR subfamily. As to quaternary structure, component of the spliceosome. Interacts with SNRNP35, CYP59 and CYP63. In terms of processing, phosphorylated. As to expression, ubiquitous.

The protein resides in the nucleus speckle. It localises to the nucleus. Its subcellular location is the nucleoplasm. The protein localises to the cytoplasm. Functionally, regulatory splicing factor that modulates alternative splicing and gene expression in specific cell types. Autoregulates its own expression. Probably involved in intron recognition and spliceosome assembly. This is Serine/arginine-rich splicing factor SR30 (SR30) from Arabidopsis thaliana (Mouse-ear cress).